Here is a 1454-residue protein sequence, read N- to C-terminus: E3 ubiquitin-protein ligase substrate receptor MMS22 (1454 aa).

A disordered region spans residues N159–H178. A required for interaction with MMS1 region spans residues Y1201–T1454.

Belongs to the MMS22 family. As to quaternary structure, component of a cullin-RING ligase (CRL) composed of 4 subunits: the RING protein HRT1, the cullin RTT101, a linker protein MMS1, and the substrate receptor MMS22. This complex further interacts with RTT107 and CTF4 to form RTT101-MMS1-MMS22-RTT107 and RTT101-MMS1-MMS22-CTF4 complexes respectively. Interacts (via C-ter) with MMS1 (via N-ter). Interacts with RTT107.

The protein resides in the nucleus. Functionally, substrate targeting component of a cullin-RING-based E3 ubiquitin-protein ligase complex RTT101(MMS1-MMS22). RTT101(MMS1-MMS22) promotes fork progression through damaged DNA or natural pause sites by stabilizing replication proteins like the replication fork-pausing complex (FPC) and leading-strand polymerase at stalled replication forks. RTT101(MMS1-MMS22) ubiquitinates the acetylated histones H3K56ac-H4 at lysine residues H3K121, H3K122 and H3K125. Ubiquitination is required for efficient histone deposition during replication-coupled nucleosome assembly, probably by facilitating the transfer of H3-H4 from ASF1 to other chaperones involved in histone deposition. The chain is E3 ubiquitin-protein ligase substrate receptor MMS22 (MMS22) from Saccharomyces cerevisiae (strain ATCC 204508 / S288c) (Baker's yeast).